The primary structure comprises 167 residues: Putative C-type lectin protein FPV008/FPV253 (167 aa).

One can recognise a C-type lectin domain in the interval 49–152 (CPDEWIGYNS…SCIFHERTIC (104 aa)). 2 disulfides stabilise this stretch: Cys-77-Cys-152 and Cys-131-Cys-144.

The sequence is that of Putative C-type lectin protein FPV008/FPV253 from Vertebrata (FPV).